We begin with the raw amino-acid sequence, 169 residues long: Large ribosomal subunit protein uL10 (169 aa).

The protein belongs to the universal ribosomal protein uL10 family. As to quaternary structure, part of the ribosomal stalk of the 50S ribosomal subunit. The N-terminus interacts with L11 and the large rRNA to form the base of the stalk. The C-terminus forms an elongated spine to which L12 dimers bind in a sequential fashion forming a multimeric L10(L12)X complex.

Its function is as follows. Forms part of the ribosomal stalk, playing a central role in the interaction of the ribosome with GTP-bound translation factors. This is Large ribosomal subunit protein uL10 from Rickettsia rickettsii (strain Iowa).